A 134-amino-acid polypeptide reads, in one-letter code: Large ribosomal subunit protein uL16c (134 aa).

The span at 1 to 17 (MLSPKRTRFRKQHRGRM) shows a compositional bias: basic residues. Positions 1-21 (MLSPKRTRFRKQHRGRMKGIS) are disordered.

Belongs to the universal ribosomal protein uL16 family. In terms of assembly, part of the 50S ribosomal subunit.

The protein resides in the plastid. The protein localises to the chloroplast. The polypeptide is Large ribosomal subunit protein uL16c (Solanum bulbocastanum (Wild potato)).